Here is a 435-residue protein sequence, read N- to C-terminus: Histidine--tRNA ligase (435 aa).

This sequence belongs to the class-II aminoacyl-tRNA synthetase family. Homodimer.

The protein localises to the cytoplasm. It carries out the reaction tRNA(His) + L-histidine + ATP = L-histidyl-tRNA(His) + AMP + diphosphate + H(+). The polypeptide is Histidine--tRNA ligase (Synechococcus sp. (strain ATCC 27144 / PCC 6301 / SAUG 1402/1) (Anacystis nidulans)).